A 648-amino-acid chain; its full sequence is Macrolide export ATP-binding/permease protein MacB (648 aa).

Residues 1–272 (MTPLLELKDI…RALAANKMRT (272 aa)) lie on the Cytoplasmic side of the membrane. The 239-residue stretch at 5 to 243 (LELKDIRRSY…TGGTEPVVNT (239 aa)) folds into the ABC transporter domain. 41–48 (GASGSGKS) is a binding site for ATP. A helical transmembrane segment spans residues 273-293 (LLTMLGIIIGIASVVSIVVVG). At 294–522 (DAAKQMVLAD…TVEKTTRTLQ (229 aa)) the chain is on the periplasmic side. Residues 523 to 543 (LFLTLVAVISLVVGGIGVMNI) traverse the membrane as a helical segment. Residues 544-575 (MLVSVTERTREIGIRMAVGARASDVLQQFLIE) lie on the Cytoplasmic side of the membrane. The chain crosses the membrane as a helical span at residues 576 to 596 (AVLVCLVGGALGITLSLLIAF). The Periplasmic portion of the chain corresponds to 597–610 (TLQLFLPGWEIGFS). A helical membrane pass occupies residues 611 to 631 (PLALLLAFLCSTVTGILFGWL). The Cytoplasmic segment spans residues 632 to 648 (PARNAARLDPVDALARE).

It belongs to the ABC transporter superfamily. Macrolide exporter (TC 3.A.1.122) family. Homodimer. Part of the tripartite efflux system MacAB-TolC, which is composed of an inner membrane transporter, MacB, a periplasmic membrane fusion protein, MacA, and an outer membrane component, TolC. The complex forms a large protein conduit and can translocate molecules across both the inner and outer membranes. Interacts with MacA.

Its subcellular location is the cell inner membrane. Its activity is regulated as follows. ATPase activity is stimulated by interaction with MacA and inhibited by vanadate. In terms of biological role, part of the tripartite efflux system MacAB-TolC. MacB is a non-canonical ABC transporter that contains transmembrane domains (TMD), which form a pore in the inner membrane, and an ATP-binding domain (NBD), which is responsible for energy generation. When overexpressed, the system confers resistance against macrolides composed of 14- and 15-membered lactones but no or weak resistance against 16-membered ones. In addition, the system could also transport R-LPS or a similar glycolipid. The sequence is that of Macrolide export ATP-binding/permease protein MacB from Escherichia coli (strain K12).